Reading from the N-terminus, the 1153-residue chain is Duffy receptor beta form (1153 aa).

The first 21 residues, 1 to 21 (MEGKKKRPLFFLLVLLLSHKA), serve as a signal peptide directing secretion. The Extracellular segment spans residues 22–1085 (NNVLFERMKG…YECFTKGSST (1064 aa)). Residues Asn-134, Asn-179, and Asn-202 are each glycosylated (N-linked (GlcNAc...) asparagine). 2 cysteine pairs are disulfide-bonded: Cys-214–Cys-243 and Cys-227–Cys-234. N-linked (GlcNAc...) asparagine glycans are attached at residues Asn-252 and Asn-348. Cystine bridges form between Cys-297/Cys-374, Cys-412/Cys-429, Cys-424/Cys-504, and Cys-433/Cys-502. Residues Asn-430 and Asn-467 are each glycosylated (N-linked (GlcNAc...) asparagine). 4 disordered regions span residues 520-545 (LKSAPKLETQRSHSTIQPMSSSGAEK), 565-591 (DEAAKGDGQNGNQTVAESNIKGTDNIE), 612-631 (RGATDITETGEEKLNTSYSG), and 655-981 (ENSE…LYSH). Composition is skewed to polar residues over residues 531 to 542 (SHSTIQPMSSSG) and 574 to 586 (NGNQTVAESNIKG). Asn-576 and Asn-626 each carry an N-linked (GlcNAc...) asparagine glycan. The segment covering 661 to 675 (LETKHKIFEPSKDNS) has biased composition (basic and acidic residues). The segment covering 677–733 (NSENSGSMEFKATSSNPITEAVESSSAEGQVQEDSAHRSVNTGRDNSTISAATSDDG) has biased composition (polar residues). Asn-722 is a glycosylation site (N-linked (GlcNAc...) asparagine). The span at 791–800 (IDGKNVDIAE) shows a compositional bias: basic and acidic residues. Over residues 819–834 (TDNGNVPRSGNKQNEG) the composition is skewed to polar residues. N-linked (GlcNAc...) asparagine glycans are attached at residues Asn-847 and Asn-856. The span at 867–878 (GNEKDFQKHDFM) shows a compositional bias: basic and acidic residues. Over residues 884 to 942 (NDQTSSDQTSSDQTSSNQTSSDQTSSNQTSSDQTSSDQISSDQTSSDQTSSNQTSSDQT) the composition is skewed to low complexity. N-linked (GlcNAc...) asparagine glycans are attached at residues Asn-900, Asn-910, and Asn-935. Residues 945–969 (TEEHHRDNVRNPEIKSSEDMSKGDF) are compositionally biased toward basic and acidic residues. The span at 971-981 (RNSNSNELYSH) shows a compositional bias: polar residues. A helical transmembrane segment spans residues 1086–1106 (GIGIVYFATGGAFLIILLLFV). Residues 1107 to 1153 (SKNVASNDYEEEATFDEFVEYSDDIHRTPLMPNHIEHMQQFTPLDYS) lie on the Cytoplasmic side of the membrane.

The protein resides in the membrane. In terms of biological role, binds to Neu5Gc-sialylated receptors on macaque erythrocytes. In Plasmodium knowlesi, this protein is Duffy receptor beta form.